Reading from the N-terminus, the 85-residue chain is Small ribosomal subunit protein bS18 (85 aa).

Belongs to the bacterial ribosomal protein bS18 family. In terms of assembly, part of the 30S ribosomal subunit. Forms a tight heterodimer with protein bS6.

Its function is as follows. Binds as a heterodimer with protein bS6 to the central domain of the 16S rRNA, where it helps stabilize the platform of the 30S subunit. The chain is Small ribosomal subunit protein bS18 from Helicobacter pylori (strain Shi470).